The following is a 404-amino-acid chain: CCA-adding enzyme (404 aa).

ATP contacts are provided by glycine 32 and arginine 35. CTP contacts are provided by glycine 32 and arginine 35. Aspartate 45 and aspartate 47 together coordinate Mg(2+). Positions 116, 159, 162, 165, and 168 each coordinate ATP. Positions 116, 159, 162, 165, and 168 each coordinate CTP.

Belongs to the tRNA nucleotidyltransferase/poly(A) polymerase family. Bacterial CCA-adding enzyme type 3 subfamily. Homodimer. Mg(2+) is required as a cofactor.

It carries out the reaction a tRNA precursor + 2 CTP + ATP = a tRNA with a 3' CCA end + 3 diphosphate. The enzyme catalyses a tRNA with a 3' CCA end + 2 CTP + ATP = a tRNA with a 3' CCACCA end + 3 diphosphate. Its function is as follows. Catalyzes the addition and repair of the essential 3'-terminal CCA sequence in tRNAs without using a nucleic acid template. Adds these three nucleotides in the order of C, C, and A to the tRNA nucleotide-73, using CTP and ATP as substrates and producing inorganic pyrophosphate. tRNA 3'-terminal CCA addition is required both for tRNA processing and repair. Also involved in tRNA surveillance by mediating tandem CCA addition to generate a CCACCA at the 3' terminus of unstable tRNAs. While stable tRNAs receive only 3'-terminal CCA, unstable tRNAs are marked with CCACCA and rapidly degraded. The chain is CCA-adding enzyme from Ligilactobacillus salivarius (strain UCC118) (Lactobacillus salivarius).